The following is an 84-amino-acid chain: MGNVAIIVKIMPESPEVDREALKAAVRAAVPVDDIQEEPIGFGLVALKAAVVVPDKAGAPDEVEAALQKIEGVASAEIVESTLV.

This sequence belongs to the EF-1-beta/EF-1-delta family.

Functionally, promotes the exchange of GDP for GTP in EF-1-alpha/GDP, thus allowing the regeneration of EF-1-alpha/GTP that could then be used to form the ternary complex EF-1-alpha/GTP/AAtRNA. The polypeptide is Elongation factor 1-beta (Methanoculleus marisnigri (strain ATCC 35101 / DSM 1498 / JR1)).